We begin with the raw amino-acid sequence, 494 residues long: Autocrine proliferation repressor protein A (494 aa).

A signal peptide spans 1-18; the sequence is MSKLLILLLLSLVASIFS. Residues Asn-37, Asn-153, and Asn-302 are each glycosylated (N-linked (GlcNAc...) asparagine).

The protein belongs to the pqaA family. As to quaternary structure, interacts with cfaD.

It localises to the secreted. Inhibitor that slows proliferation of secreting cells (also known as chalone). May function by binding to cell surface receptors. Requires cfaD for activity. Overexpression slows proliferation. This chain is Autocrine proliferation repressor protein A (aprA), found in Dictyostelium discoideum (Social amoeba).